We begin with the raw amino-acid sequence, 833 residues long: Phenylalanine--tRNA ligase beta subunit (833 aa).

The region spanning 42 to 157 (ADLKGPLAVG…PEYEVGTDAI (116 aa)) is the tRNA-binding domain. The B5 domain occupies 411–485 (SAPHTITIPA…RLEGYENLPS (75 aa)). Mg(2+) is bound by residues Asp-463, Asp-469, Glu-472, and Glu-473. Residues 739 to 832 (STFPVATQDV…AAERTGAALR (94 aa)) enclose the FDX-ACB domain.

This sequence belongs to the phenylalanyl-tRNA synthetase beta subunit family. Type 1 subfamily. In terms of assembly, tetramer of two alpha and two beta subunits. The cofactor is Mg(2+).

It localises to the cytoplasm. It carries out the reaction tRNA(Phe) + L-phenylalanine + ATP = L-phenylalanyl-tRNA(Phe) + AMP + diphosphate + H(+). This Streptomyces avermitilis (strain ATCC 31267 / DSM 46492 / JCM 5070 / NBRC 14893 / NCIMB 12804 / NRRL 8165 / MA-4680) protein is Phenylalanine--tRNA ligase beta subunit.